A 352-amino-acid chain; its full sequence is uncharacterized protein (352 aa).

To Synechocystis PCC 6803 slr0039.

This is an uncharacterized protein from Archaeoglobus fulgidus (strain ATCC 49558 / DSM 4304 / JCM 9628 / NBRC 100126 / VC-16).